We begin with the raw amino-acid sequence, 678 residues long: DNA gyrase subunit B (678 aa).

Residues Ser456–Pro570 enclose the Toprim domain. Mg(2+) is bound by residues Glu462, Asp535, and Asp537.

Belongs to the type II topoisomerase GyrB family. As to quaternary structure, heterotetramer, composed of two GyrA and two GyrB chains. In the heterotetramer, GyrA contains the active site tyrosine that forms a transient covalent intermediate with the DNA, while GyrB binds cofactors catalyzes ATP hydrolysis. Mg(2+) is required as a cofactor. Mn(2+) serves as cofactor. The cofactor is Ca(2+).

The protein localises to the cytoplasm. The catalysed reaction is ATP-dependent breakage, passage and rejoining of double-stranded DNA.. DNA supercoiling is inhibited by fluoroquinolones; IC(50) 1 ug/ml for sitafloxacin. In terms of biological role, a type II topoisomerase that negatively supercoils closed circular double-stranded (ds) DNA in an ATP-dependent manner to modulate DNA topology and maintain chromosomes in an underwound state. Negative supercoiling favors strand separation, and DNA replication, transcription, recombination and repair, all of which involve strand separation. Also able to catalyze the interconversion of other topological isomers of dsDNA rings, including catenanes and knotted rings. Type II topoisomerases break and join 2 DNA strands simultaneously in an ATP-dependent manner. The sequence is that of DNA gyrase subunit B from Mycobacterium leprae (strain TN).